We begin with the raw amino-acid sequence, 180 residues long: MSRQANRGTESKKMSSELFTLTYGALVTQLCKDYENDEDVNKQLDKMGFNIGVRLIEDFLARSNVGRCHDFRETADVIAKVAFKMYLGITPSITNWSPAGDEFSLILENNPLVDFVELPDNHSSLIYSNLLCGVLRGALEMVQMAVEAKFVQDTLKGDGVTEIRMRFIRRIEDNLPAGEE.

Cys68 is lipidated: S-palmitoyl cysteine.

It belongs to the TRAPP small subunits family. BET3 subfamily. Homodimer. Component of the multisubunit transport protein particle (TRAPP) complex, which includes at least TRAPPC2, TRAPPC2L, TRAPPC3, TRAPPC3L, TRAPPC4, TRAPPC5, TRAPPC8, TRAPPC9, TRAPPC10, TRAPPC11 and TRAPPC12. Heterodimer with TRAPPC6A. The heterodimer TRAPPC3-TRAPPC6A interacts with TRAPPC2L. Heterodimer with TRAPPC6b. The heterodimer TRAPPC6B-TRAPPC3 interacts with TRAPPC1 likely providing a core for TRAPP complex formation.

The protein resides in the golgi apparatus. The protein localises to the cis-Golgi network. Its subcellular location is the endoplasmic reticulum. May play a role in vesicular transport from endoplasmic reticulum to Golgi. The chain is Trafficking protein particle complex subunit 3 from Homo sapiens (Human).